The sequence spans 149 residues: 3-dehydroquinate dehydratase (149 aa).

Tyrosine 26 functions as the Proton acceptor in the catalytic mechanism. Substrate-binding residues include asparagine 77, histidine 83, and aspartate 90. Histidine 103 serves as the catalytic Proton donor. Substrate-binding positions include 104–105 (LS) and arginine 114.

It belongs to the type-II 3-dehydroquinase family. Homododecamer.

The enzyme catalyses 3-dehydroquinate = 3-dehydroshikimate + H2O. Its pathway is metabolic intermediate biosynthesis; chorismate biosynthesis; chorismate from D-erythrose 4-phosphate and phosphoenolpyruvate: step 3/7. Catalyzes a trans-dehydration via an enolate intermediate. This chain is 3-dehydroquinate dehydratase, found in Haemophilus influenzae (strain PittGG).